We begin with the raw amino-acid sequence, 393 residues long: Short-chain dehydrogenase/reductase family 42E member 1 (393 aa).

The Proton acceptor role is filled by Tyr152. Residue Lys156 coordinates NAD(+). 2 helical membrane-spanning segments follow: residues 282-302 and 371-391; these read LPLT…FILG and GLVI…SVIL.

Belongs to the 3-beta-HSD family.

The protein resides in the membrane. The polypeptide is Short-chain dehydrogenase/reductase family 42E member 1 (SDR42E1) (Bos taurus (Bovine)).